A 123-amino-acid chain; its full sequence is Dormancy-associated protein homolog 4 (123 aa).

The segment at 7–86 (LWDETVAGPT…NPGTPLTPGT (80 aa)) is disordered. Positions 30-46 (LSTVRSSPPSLSSDQVT) are enriched in low complexity. Composition is skewed to polar residues over residues 47–58 (RSIMVTKGNNNV) and 71–80 (PTCSSSNPGT). The residue at position 74 (S74) is a Phosphoserine.

It belongs to the DRM1/ARP family.

The sequence is that of Dormancy-associated protein homolog 4 from Arabidopsis thaliana (Mouse-ear cress).